Consider the following 273-residue polypeptide: MKIGFIGTGNMGTILIESFIESKAADPSNMTITNRTIEKALHIKNRYNSINVTESLEKLVSENEMIFICVKPLDIYPLLARALPYLRKDHILISITSPVQTEQLEQYVPCQVARVIPSITNRALAGVSLVTFGTSCGESAKAKINELMQHISHPLQIESDITRVASDIVSCGPAFMSYLIQRFIDAAVSETSVSKQDAILMCKEMLVGMGKLLETELYTLPALQEKVCVKGGVTGEGIKALESGVQDMFHRVFQNTHMKYEEDISAVKKQFHV.

The protein belongs to the pyrroline-5-carboxylate reductase family.

Functionally, dispensable for transformability. Not known if it can act as a pyrroline-5-carboxylate reductase. This is ComE operon protein 4 (comER) from Bacillus subtilis (strain 168).